The sequence spans 439 residues: 26S proteasome regulatory subunit 6A (439 aa).

The residue at position 1 (M1) is an N-acetylmethionine. S9 bears the Phosphoserine mark. 227–234 (GPPGTGKT) is an ATP binding site. The residue at position 376 (S376) is a Phosphoserine.

Belongs to the AAA ATPase family. Component of the 19S proteasome regulatory particle complex. The 26S proteasome consists of a 20S core particle (CP) and two 19S regulatory subunits (RP). The regulatory particle is made of a lid composed of 9 subunits, a base containing 6 ATPases including PSMC3 and few additional components. Interacts with PAAF1. In terms of assembly, (Microbial infection) Interacts with HIV-1 Tat. Post-translationally, sumoylated by UBE2I in response to MEKK1-mediated stimuli.

It is found in the cytoplasm. Its subcellular location is the nucleus. Component of the 26S proteasome, a multiprotein complex involved in the ATP-dependent degradation of ubiquitinated proteins. This complex plays a key role in the maintenance of protein homeostasis by removing misfolded or damaged proteins, which could impair cellular functions, and by removing proteins whose functions are no longer required. Therefore, the proteasome participates in numerous cellular processes, including cell cycle progression, apoptosis, or DNA damage repair. PSMC3 belongs to the heterohexameric ring of AAA (ATPases associated with diverse cellular activities) proteins that unfolds ubiquitinated target proteins that are concurrently translocated into a proteolytic chamber and degraded into peptides. This chain is 26S proteasome regulatory subunit 6A (PSMC3), found in Homo sapiens (Human).